A 307-amino-acid polypeptide reads, in one-letter code: Small ribosomal subunit biogenesis GTPase RsgA (307 aa).

Positions 1–20 (MPSEHPFSDGISTPNPKETM) are disordered. A compositionally biased stretch (polar residues) spans 10–20 (GISTPNPKETM). Residues 85–242 (RQDAWKTKLI…LIDSPGLQEF (158 aa)) enclose the CP-type G domain. GTP contacts are provided by residues 135 to 138 (NKAD) and 184 to 192 (GQSGMGKST). Residues Cys266, Cys271, His273, and Cys279 each contribute to the Zn(2+) site.

The protein belongs to the TRAFAC class YlqF/YawG GTPase family. RsgA subfamily. Monomer. Associates with 30S ribosomal subunit, binds 16S rRNA. It depends on Zn(2+) as a cofactor.

The protein resides in the cytoplasm. One of several proteins that assist in the late maturation steps of the functional core of the 30S ribosomal subunit. Helps release RbfA from mature subunits. May play a role in the assembly of ribosomal proteins into the subunit. Circularly permuted GTPase that catalyzes slow GTP hydrolysis, GTPase activity is stimulated by the 30S ribosomal subunit. The polypeptide is Small ribosomal subunit biogenesis GTPase RsgA (Neisseria meningitidis serogroup C / serotype 2a (strain ATCC 700532 / DSM 15464 / FAM18)).